A 569-amino-acid chain; its full sequence is Phosphoglucomutase 2 (569 aa).

Residues Met1–Leu23 are disordered. Ser2 carries the post-translational modification N-acetylserine. Arg24 provides a ligand contact to alpha-D-glucose 1,6-bisphosphate. Residues Thr111 and Thr117 each carry the phosphothreonine modification. Ser119 serves as a coordination point for alpha-D-glucose 1,6-bisphosphate. Catalysis depends on Ser119, which acts as the Phosphoserine intermediate. Mg(2+) is bound by residues Ser119, Asp290, Asp292, and Asp294. Residue Ser119 is modified to Phosphoserine. Asp294, Arg295, Thr359, Glu378, Ser380, and Lys391 together coordinate alpha-D-glucose 1,6-bisphosphate.

It belongs to the phosphohexose mutase family. In terms of assembly, monomer. Mg(2+) serves as cofactor. It depends on Zn(2+) as a cofactor. In terms of processing, O-glycosylated with mannose residues. Substrate of UDP-glucose--glycoprotein glucose phosphotransferase, linking glucose in a phosphodiester linkage to O-linked mannose.

It localises to the cytoplasm. The catalysed reaction is alpha-D-glucose 1-phosphate = alpha-D-glucose 6-phosphate. It catalyses the reaction O-phospho-L-seryl-[protein] + alpha-D-glucose 1-phosphate = alpha-D-glucose 1,6-bisphosphate + L-seryl-[protein]. It carries out the reaction alpha-D-glucose 1,6-bisphosphate + L-seryl-[protein] = O-phospho-L-seryl-[protein] + alpha-D-glucose 6-phosphate. Major phosphoglucomutase isozyme that catalyzes the reversible isomerization of alpha-D-glucose 1-phosphate to alpha-D-glucose 6-phosphate. The mechanism proceeds via the intermediate compound alpha-D-glucose 1,6-bisphosphate. Constitutes about 80-90% of the phosphoglucomutase activity in the cell. Key enzyme in hexose metabolism. The forward reaction is an essential step in the energy metabolism of galactose since the product of the galactose pathway enzymes in yeast is glucose 1-phosphate. The reverse reaction is an essential step for biosynthesis when carbon sources other than galactose are the energy source because glucose 1-phosphate is the starting point for the synthesis of UDP-glucose, which acts as a precursor for the synthesis of oligosaccharides and trehalose. The protein is Phosphoglucomutase 2 of Saccharomyces cerevisiae (strain ATCC 204508 / S288c) (Baker's yeast).